The primary structure comprises 102 residues: Aspartyl/glutamyl-tRNA(Asn/Gln) amidotransferase subunit C (102 aa).

This sequence belongs to the GatC family. In terms of assembly, heterotrimer of A, B and C subunits.

It catalyses the reaction L-glutamyl-tRNA(Gln) + L-glutamine + ATP + H2O = L-glutaminyl-tRNA(Gln) + L-glutamate + ADP + phosphate + H(+). It carries out the reaction L-aspartyl-tRNA(Asn) + L-glutamine + ATP + H2O = L-asparaginyl-tRNA(Asn) + L-glutamate + ADP + phosphate + 2 H(+). Functionally, allows the formation of correctly charged Asn-tRNA(Asn) or Gln-tRNA(Gln) through the transamidation of misacylated Asp-tRNA(Asn) or Glu-tRNA(Gln) in organisms which lack either or both of asparaginyl-tRNA or glutaminyl-tRNA synthetases. The reaction takes place in the presence of glutamine and ATP through an activated phospho-Asp-tRNA(Asn) or phospho-Glu-tRNA(Gln). This chain is Aspartyl/glutamyl-tRNA(Asn/Gln) amidotransferase subunit C, found in Bordetella parapertussis (strain 12822 / ATCC BAA-587 / NCTC 13253).